The sequence spans 336 residues: Holliday junction branch migration complex subunit RuvB (336 aa).

The large ATPase domain (RuvB-L) stretch occupies residues 4–184 (ADRLISAGAT…FGIVQRLEFY (181 aa)). ATP is bound by residues Ile-23, Arg-24, Gly-65, Lys-68, Thr-69, Thr-70, 131-133 (EDY), Arg-174, Tyr-184, and Arg-221. Thr-69 is a Mg(2+) binding site. Residues 185-255 (QVPDLQHIVG…IAAQALDMLN (71 aa)) form a small ATPAse domain (RuvB-S) region. The head domain (RuvB-H) stretch occupies residues 258–336 (AEGFDYMDRK…HFGITPPEMP (79 aa)). Positions 294, 313, and 318 each coordinate DNA.

This sequence belongs to the RuvB family. As to quaternary structure, homohexamer. Forms an RuvA(8)-RuvB(12)-Holliday junction (HJ) complex. HJ DNA is sandwiched between 2 RuvA tetramers; dsDNA enters through RuvA and exits via RuvB. An RuvB hexamer assembles on each DNA strand where it exits the tetramer. Each RuvB hexamer is contacted by two RuvA subunits (via domain III) on 2 adjacent RuvB subunits; this complex drives branch migration. In the full resolvosome a probable DNA-RuvA(4)-RuvB(12)-RuvC(2) complex forms which resolves the HJ.

It localises to the cytoplasm. It catalyses the reaction ATP + H2O = ADP + phosphate + H(+). Functionally, the RuvA-RuvB-RuvC complex processes Holliday junction (HJ) DNA during genetic recombination and DNA repair, while the RuvA-RuvB complex plays an important role in the rescue of blocked DNA replication forks via replication fork reversal (RFR). RuvA specifically binds to HJ cruciform DNA, conferring on it an open structure. The RuvB hexamer acts as an ATP-dependent pump, pulling dsDNA into and through the RuvAB complex. RuvB forms 2 homohexamers on either side of HJ DNA bound by 1 or 2 RuvA tetramers; 4 subunits per hexamer contact DNA at a time. Coordinated motions by a converter formed by DNA-disengaged RuvB subunits stimulates ATP hydrolysis and nucleotide exchange. Immobilization of the converter enables RuvB to convert the ATP-contained energy into a lever motion, pulling 2 nucleotides of DNA out of the RuvA tetramer per ATP hydrolyzed, thus driving DNA branch migration. The RuvB motors rotate together with the DNA substrate, which together with the progressing nucleotide cycle form the mechanistic basis for DNA recombination by continuous HJ branch migration. Branch migration allows RuvC to scan DNA until it finds its consensus sequence, where it cleaves and resolves cruciform DNA. The chain is Holliday junction branch migration complex subunit RuvB from Salmonella arizonae (strain ATCC BAA-731 / CDC346-86 / RSK2980).